Here is a 356-residue protein sequence, read N- to C-terminus: UDP-N-acetylglucosamine--N-acetylmuramyl-(pentapeptide) pyrophosphoryl-undecaprenol N-acetylglucosamine transferase (356 aa).

The UDP-N-acetyl-alpha-D-glucosamine site is built by Arg-166, Ser-196, and Gln-290.

Belongs to the glycosyltransferase 28 family. MurG subfamily.

It is found in the cell membrane. The enzyme catalyses Mur2Ac(oyl-L-Ala-gamma-D-Glu-L-Lys-D-Ala-D-Ala)-di-trans,octa-cis-undecaprenyl diphosphate + UDP-N-acetyl-alpha-D-glucosamine = beta-D-GlcNAc-(1-&gt;4)-Mur2Ac(oyl-L-Ala-gamma-D-Glu-L-Lys-D-Ala-D-Ala)-di-trans,octa-cis-undecaprenyl diphosphate + UDP + H(+). The protein operates within cell wall biogenesis; peptidoglycan biosynthesis. In terms of biological role, cell wall formation. Catalyzes the transfer of a GlcNAc subunit on undecaprenyl-pyrophosphoryl-MurNAc-pentapeptide (lipid intermediate I) to form undecaprenyl-pyrophosphoryl-MurNAc-(pentapeptide)GlcNAc (lipid intermediate II). This chain is UDP-N-acetylglucosamine--N-acetylmuramyl-(pentapeptide) pyrophosphoryl-undecaprenol N-acetylglucosamine transferase, found in Staphylococcus aureus (strain MRSA252).